The sequence spans 208 residues: MADLGAEDKLKQICDALRIETLKPAEDEADAIVRNAKEQAKRIIDEAQERAAQIIASAKEEADFKLRQGESALAQAGKRSLESLKQAVENKVFKESLAEWLDNALADPEVSAKLVAALIQAIEDKGISGDLTAYIGKHVATRTVNEFLGKTILAKLRGKGVAVGSFVGGVQLKVEDKNWVLDLSSDTLLDLLMRYLQKDFREMIFQGS.

The protein belongs to the V-ATPase E subunit family.

Its function is as follows. Produces ATP from ADP in the presence of a proton gradient across the membrane. The polypeptide is V-type ATP synthase subunit E (Chlamydia felis (strain Fe/C-56) (Chlamydophila felis)).